Consider the following 396-residue polypeptide: Elongation factor Tu 2 (396 aa).

Positions 10–206 (KPHCNIGTIG…TVDAYIPQPD (197 aa)) constitute a tr-type G domain. Residues 19-26 (GHVDHGKT) form a G1 region. 19-26 (GHVDHGKT) serves as a coordination point for GTP. Thr26 provides a ligand contact to Mg(2+). A G2 region spans residues 60–64 (GITIN). The tract at residues 81–84 (DCPG) is G3. GTP contacts are provided by residues 81–85 (DCPGH) and 136–139 (NKVD). Positions 136–139 (NKVD) are G4. The G5 stretch occupies residues 174-176 (SAK).

It belongs to the TRAFAC class translation factor GTPase superfamily. Classic translation factor GTPase family. EF-Tu/EF-1A subfamily. Monomer.

Its subcellular location is the cytoplasm. The enzyme catalyses GTP + H2O = GDP + phosphate + H(+). GTP hydrolase that promotes the GTP-dependent binding of aminoacyl-tRNA to the A-site of ribosomes during protein biosynthesis. This is Elongation factor Tu 2 from Caulobacter sp. (strain K31).